We begin with the raw amino-acid sequence, 132 residues long: Large ribosomal subunit protein bL19 (132 aa).

This sequence belongs to the bacterial ribosomal protein bL19 family.

In terms of biological role, this protein is located at the 30S-50S ribosomal subunit interface and may play a role in the structure and function of the aminoacyl-tRNA binding site. In Maricaulis maris (strain MCS10) (Caulobacter maris), this protein is Large ribosomal subunit protein bL19.